Here is a 62-residue protein sequence, read N- to C-terminus: uncharacterized protein (62 aa).

This is an uncharacterized protein from Mesomycoplasma hyorhinis (Mycoplasma hyorhinis).